Here is a 498-residue protein sequence, read N- to C-terminus: Glycerol kinase (498 aa).

Thr-12 serves as a coordination point for ADP. 3 residues coordinate ATP: Thr-12, Thr-13, and Ser-14. Thr-12 provides a ligand contact to sn-glycerol 3-phosphate. Arg-16 contributes to the ADP binding site. Sn-glycerol 3-phosphate-binding residues include Arg-82, Glu-83, Tyr-134, and Asp-243. Residues Arg-82, Glu-83, Tyr-134, Asp-243, and Gln-244 each contribute to the glycerol site. ADP contacts are provided by Thr-265 and Gly-308. ATP is bound by residues Thr-265, Gly-308, Gln-312, and Gly-411. Residue Gly-411 coordinates ADP.

This sequence belongs to the FGGY kinase family.

It catalyses the reaction glycerol + ATP = sn-glycerol 3-phosphate + ADP + H(+). It participates in polyol metabolism; glycerol degradation via glycerol kinase pathway; sn-glycerol 3-phosphate from glycerol: step 1/1. Inhibited by fructose 1,6-bisphosphate (FBP). Its function is as follows. Key enzyme in the regulation of glycerol uptake and metabolism. Catalyzes the phosphorylation of glycerol to yield sn-glycerol 3-phosphate. The protein is Glycerol kinase of Brucella canis (strain ATCC 23365 / NCTC 10854 / RM-666).